The following is an 865-amino-acid chain: MVVSAGPWSSEKAEMNILEINEKLRPQLAENKQQFRNLKERCFLTQLAGFLANRQKKYKYEECKDLIKFMLRNERQFKEEKLAEQLKQAEELRQYKVLVHSQERELTQLREKLREGRDASRSLNEHLQALLTPDEPDKSQGQDLQEQLAEGCRLAQHLVQKLSPENDEDEDEDVQVEEDEKVLESSAPREVQKAEESKVPEDSLEECAITCSNSHGPCDSIQPHKNIKITFEEDKVNSSLVVDRESSHDGCQDALNILPVPGPTSSATNVSMVVSAGPLSSEKAEMNILEINEKLCPQLAEKKQQFRSLKEKCFVTQVACFLAKQQNKYKYEECKDLIKSMLRNERQFKEEKLAEQLKQAEELRQYKVLVHSQERELTQLREKLREGRDASRSLNEHLQALLTPDEPDKSQGQDLQEQLAEGCRLAQHLVQKLSPENDNDDDEDVQVEVAEKVQKSSSPREMQKAEEKEVPEDSLEECAITCSNSHGPYDSNQPHRKTKITFEEDKVDSTLIGSSSHVEWEDAVHIIPENESDDEEEEEKGPVSPRNLQESEEEEVPQESWDEGYSTLSIPPERLASYQSYSSTFHSLEEQQVCMAVDIGRHRWDQVKKEDQEATGPRLSRELLDEKEPEVLQDSLDRCYSTPSVYLGLTDSCQPYRSAFYVLEQQRIGLAVDMDEIEKYQEVEEDQDPSCPRLSRELLAEKEPEVLQDSLDRCYSTPSGYLELPDLGQPYRSAVYSLEEQYLGLALDVDRIKKDQEEEEDQGPPCPRLSRELLEVVEPEVLQDSLDVIQLLPVVLNSLTPASPTEVPFMHWRKNMLAFLLTWEKLKRRGRGRKEGEEDQRRKEEGEEKKGKKIKTHHAPGSAAC.

Residues 70 to 130 (MLRNERQFKE…RSLNEHLQAL (61 aa)) are a coiled coil. The disordered stretch occupies residues 161–200 (KLSPENDEDEDEDVQVEEDEKVLESSAPREVQKAEESKVP). Over residues 165–181 (ENDEDEDEDVQVEEDEK) the composition is skewed to acidic residues. Positions 165–259 (ENDEDEDEDV…GCQDALNILP (95 aa)) constitute an Olduvai 1 domain. Basic and acidic residues predominate over residues 190–200 (EVQKAEESKVP). Residues 339–401 (KSMLRNERQF…RSLNEHLQAL (63 aa)) are a coiled coil. 5 Olduvai domains span residues 436–528 (ENDN…HIIP), 529–617 (ENES…ATGP), 620–675 (SREL…VDMD), 676–767 (EIEK…PPCP), and 770–865 (SREL…SAAC). 2 disordered regions span residues 450 to 475 (AEKV…EDSL) and 520 to 567 (WEDA…GYST). Composition is skewed to acidic residues over residues 530–539 (NESDDEEEEE) and 550–562 (ESEE…ESWD). Residues 829–865 (RGRGRKEGEEDQRRKEEGEEKKGKKIKTHHAPGSAAC) are disordered. Positions 833-850 (RKEGEEDQRRKEEGEEKK) are enriched in basic and acidic residues.

Belongs to the NBPF family. As to expression, expressed in spinal cord.

It is found in the cytoplasm. The sequence is that of NBPF family member NBPF11 from Homo sapiens (Human).